The primary structure comprises 388 residues: Mannosyl-3-phosphoglycerate synthase (388 aa).

This sequence belongs to the glycosyltransferase 2 family.

The protein localises to the cytoplasm. It carries out the reaction (2R)-3-phosphoglycerate + GDP-alpha-D-mannose = 2-O-(alpha-D-mannosyl)-3-phosphoglycerate + GDP + H(+). The protein operates within carbohydrate biosynthesis; 2-(alpha-D-mannosyl)-D-glycerate biosynthesis; 2-(alpha-D-mannosyl)-D-glycerate from GDP-alpha-D-mannose (MPG route): step 1/2. Functionally, transfers a mannosyl group from GDP-mannose to phosphoglycerate to form mannosyl-3-phosphoglycerate (MPG). This chain is Mannosyl-3-phosphoglycerate synthase (mngA), found in Aeropyrum pernix (strain ATCC 700893 / DSM 11879 / JCM 9820 / NBRC 100138 / K1).